We begin with the raw amino-acid sequence, 72 residues long: MLKPKGKNTKKAAAADEDDGAVAVVGKFVKEWGTWTAKKAKVITHYGFIPLVIIIGMNSEPKPSLSQLLSPV.

Over 2–41 (LKPKGKNTKKAAAADEDDGAVAVVGKFVKEWGTWTAKKAK) the chain is Cytoplasmic. Residues 42–59 (VITHYGFIPLVIIIGMNS) traverse the membrane as a helical segment. Over 60–72 (EPKPSLSQLLSPV) the chain is Mitochondrial intermembrane.

This sequence belongs to the Tom7 family. Forms part of the preprotein translocase complex of the outer mitochondrial membrane (TOM complex).

Its subcellular location is the mitochondrion outer membrane. Seems to act as a modulator of the dynamics of the mitochondrial protein transport machinery. Seems to promote the dissociation of subunits of the outer membrane translocase. This is Mitochondrial import receptor subunit TOM7-1 (TOM7-1) from Solanum tuberosum (Potato).